Reading from the N-terminus, the 250-residue chain is ATP synthase subunit a (250 aa).

The next 6 helical transmembrane spans lie at 29–49, 84–104, 114–134, 143–163, 185–205, and 208–228; these read ASLF…FATS, FFPL…LGMV, IIVT…YGFI, LFVP…IEII, ITLK…ALGI, and AILP…VAFL.

Belongs to the ATPase A chain family. In terms of assembly, F-type ATPases have 2 components, CF(1) - the catalytic core - and CF(0) - the membrane proton channel. CF(1) has five subunits: alpha(3), beta(3), gamma(1), delta(1), epsilon(1). CF(0) has three main subunits: a(1), b(2) and c(9-12). The alpha and beta chains form an alternating ring which encloses part of the gamma chain. CF(1) is attached to CF(0) by a central stalk formed by the gamma and epsilon chains, while a peripheral stalk is formed by the delta and b chains.

It localises to the cell inner membrane. Key component of the proton channel; it plays a direct role in the translocation of protons across the membrane. This is ATP synthase subunit a from Rhizobium rhizogenes (strain K84 / ATCC BAA-868) (Agrobacterium radiobacter).